The sequence spans 647 residues: RalBP1-associated Eps domain-containing protein 2 (647 aa).

An EH 1 domain is found at 21 to 122 (EQQCYSELFA…RTESIKCELP (102 aa)). Residues 156 to 233 (EKNSFKRMDN…PSSEGPGAKP (78 aa)) form a disordered region. Residues 158–170 (NSFKRMDNEDKQE) show a composition bias toward basic and acidic residues. A compositionally biased stretch (low complexity) spans 221 to 230 (PEGPSSEGPG). Residue S239 is modified to Phosphoserine. In terms of domain architecture, EH 2 spans 268 to 359 (QREYYVNQFR…LQPEYLQAAF (92 aa)). Residues 301 to 336 (LSIPELSYIWELSDADCDGALTLSEFCAAFHLIVAR) form the EF-hand domain. Residues D314, D316, D318, and E325 each contribute to the Ca(2+) site. The tract at residues 402-478 (PTQDVTTADD…PRPQKTHSRA (77 aa)) is disordered. T466 carries the phosphothreonine modification. Position 480 is a phosphoserine (S480). A disordered region spans residues 492–568 (PAANSGLLPP…PENQTTESQE (77 aa)). Over residues 499–510 (LPPPPALPPRPC) the composition is skewed to pro residues. The segment at 501 to 647 (PPPALPPRPC…LEQLRPVTVL (147 aa)) is interaction with RALBP1. The segment covering 524 to 539 (SQLNRAPSQAAESSPT) has biased composition (polar residues). The interval 548–647 (PPSKPIRRKF…LEQLRPVTVL (100 aa)) is interaction with ASAP1. Residues 599-640 (IQTAIRKNKEANAVLARLNSELQQQLKEVHQERIALENQLEQ) adopt a coiled-coil conformation.

In terms of assembly, interacts with EPN1. Interacts with EPS15 AND EPS15L1. Interacts with RALBP1; can form a ternary complex with activated Ral (RALA or RALB). Interacts with ASAP1; the interaction is direct and this complex can bind paxillin. Also forms a ternary complex with RALBP1 and ASAP1. Interacts with GRB2. Tyrosine-phosphorylated upon stimulation of cells with EGF. Phosphorylation on Tyr-residues induces its association with the EGF receptor probably indirectly through an adapter like GRB2.

It localises to the cytoplasm. Its function is as follows. Involved in ligand-dependent receptor mediated endocytosis of the EGF and insulin receptors as part of the Ral signaling pathway. By controlling growth factor receptors endocytosis may regulate cell survival. Through ASAP1 may regulate cell adhesion and migration. The chain is RalBP1-associated Eps domain-containing protein 2 (Reps2) from Mus musculus (Mouse).